A 112-amino-acid polypeptide reads, in one-letter code: MPDYLVVLESAWTIRDADSVDDAISIAISEAGKRLNPTAKFVEVEAGILSCPYCEEELPCTLIVARTALVGVKMEMKVYKADSEEHARRIALSTIGKALRDIPLEIIEVEEL.

Belongs to the UPF0212 family.

This is UPF0212 protein Mhun_0078 from Methanospirillum hungatei JF-1 (strain ATCC 27890 / DSM 864 / NBRC 100397 / JF-1).